Consider the following 295-residue polypeptide: MSIASIASTAQGSATILDGKALAKQIEQQLSTRVDAIKAKTGRTPSLATILVGDDPASATYVRMKGNACQRVGMDSIRVEMPSATTTAELMAKIDELNNNPDVHGILLQHPVPAHIDERACFEQIDLAKDVDGVTCLGFGRMAMQQSAYGSCTPQGIMHLLEHHNIELAGLEAVVVGRSAILGKPMAMMLLNANCTVTICHSRTQDLESHIKRADIVVGAVGVPELIKANWIKAGAVVIDAGFHPTDNGGVGDIELQGVENIASAYTPVPGGVGPMTINTLIRQTVDAAEKSAGL.

NADP(+)-binding positions include Gly-177–Ser-179 and Ser-202.

Belongs to the tetrahydrofolate dehydrogenase/cyclohydrolase family. Homodimer.

It catalyses the reaction (6R)-5,10-methylene-5,6,7,8-tetrahydrofolate + NADP(+) = (6R)-5,10-methenyltetrahydrofolate + NADPH. The catalysed reaction is (6R)-5,10-methenyltetrahydrofolate + H2O = (6R)-10-formyltetrahydrofolate + H(+). It functions in the pathway one-carbon metabolism; tetrahydrofolate interconversion. In terms of biological role, catalyzes the oxidation of 5,10-methylenetetrahydrofolate to 5,10-methenyltetrahydrofolate and then the hydrolysis of 5,10-methenyltetrahydrofolate to 10-formyltetrahydrofolate. This chain is Bifunctional protein FolD, found in Psychrobacter arcticus (strain DSM 17307 / VKM B-2377 / 273-4).